The sequence spans 396 residues: Purine ribonucleoside efflux pump NepI (396 aa).

Residues 1–21 (MSEFIAENRGADAITRPNWSA) are Cytoplasmic-facing. Residues 22-42 (VFSVAFCVACLIIVEFLPVSL) traverse the membrane as a helical segment. Residues 43–54 (LTPMAQDLGISE) lie on the Periplasmic side of the membrane. Residues 55 to 75 (GVAGQSVTVTAFVAMFASLFI) traverse the membrane as a helical segment. The Cytoplasmic portion of the chain corresponds to 76-85 (TQTIQATDRR). The chain crosses the membrane as a helical span at residues 86 to 106 (YVVILFAVLLTLSCLLVSFAN). A topological domain (periplasmic) is located at residue S107. The helical transmembrane segment at 108-128 (FSLLLIGRACLGLALGGFWAM) threads the bilayer. Residues 129–147 (SASLTMRLVPPRTVPKALS) lie on the Cytoplasmic side of the membrane. A helical transmembrane segment spans residues 148–168 (VIFGAVSIALVIAAPLGSFLG). Over 169 to 175 (ELIGWRN) the chain is Periplasmic. A helical membrane pass occupies residues 176-196 (VFNAAAAMGVLCIFWIIKSLP). Residues 197–215 (SLPGEPSHQKQNTFRLLQR) lie on the Cytoplasmic side of the membrane. Residues 216–236 (PGVMAGMIAIFMSFAGQFAFF) form a helical membrane-spanning segment. Topologically, residues 237-255 (TYIRPVYMNLAGFGVDGLT) are periplasmic. Residues 256 to 276 (LVLLSFGIASFVGTSLSSFIL) traverse the membrane as a helical segment. Residues 277–281 (KRSVK) are Cytoplasmic-facing. A helical membrane pass occupies residues 282–302 (LALAGAPFVLALSALVLTLWG). Residues 303 to 305 (SDK) are Periplasmic-facing. A helical membrane pass occupies residues 306-326 (IVATGVAIIWGLTFALIPVGW). Topologically, residues 327–343 (STWITRSLADQAEKAGS) are cytoplasmic. A helical membrane pass occupies residues 344-364 (IQVAVIQLANTCGAAIGGYAL). The Periplasmic portion of the chain corresponds to 365–366 (DN). A helical membrane pass occupies residues 367–387 (IGLTSPLMLSGTLMLLTALLV). Over 388–396 (TAKVKMKKS) the chain is Cytoplasmic.

This sequence belongs to the major facilitator superfamily. DHA1 family. NepI (TC 2.A.1.2.26) subfamily.

The protein localises to the cell inner membrane. The catalysed reaction is inosine(in) + H(+)(out) = inosine(out) + H(+)(in). The enzyme catalyses guanosine(in) + H(+)(out) = guanosine(out) + H(+)(in). Involved in the efflux of purine ribonucleosides, such as inosine and guanosine. The polypeptide is Purine ribonucleoside efflux pump NepI (Escherichia coli O1:K1 / APEC).